Here is a 268-residue protein sequence, read N- to C-terminus: Protein MGF 300-1L (268 aa).

Residues 1 to 175 lie on the Cytoplasmic side of the membrane; sequence MVSLTTYCLK…QTFKTFYAKN (175 aa). The chain crosses the membrane as a helical span at residues 176–193; the sequence is YSLSTLYCIFLAIYYKLY. The Extracellular segment spans residues 194-268; sequence MALRKMVKIY…MYAFSQNNFW (75 aa).

Belongs to the asfivirus MGF 300 family.

Its subcellular location is the host membrane. Plays a role in virus cell tropism, and may be required for efficient virus replication in macrophages. This is Protein MGF 300-1L from African swine fever virus (isolate Tick/Malawi/Lil 20-1/1983) (ASFV).